We begin with the raw amino-acid sequence, 382 residues long: Alanine racemase (382 aa).

The active-site Proton acceptor; specific for D-alanine is Lys-39. Position 39 is an N6-(pyridoxal phosphate)lysine (Lys-39). Arg-138 contacts substrate. The active-site Proton acceptor; specific for L-alanine is the Tyr-265. Substrate is bound at residue Met-312.

Belongs to the alanine racemase family. It depends on pyridoxal 5'-phosphate as a cofactor.

It carries out the reaction L-alanine = D-alanine. It participates in amino-acid biosynthesis; D-alanine biosynthesis; D-alanine from L-alanine: step 1/1. In terms of biological role, catalyzes the interconversion of L-alanine and D-alanine. May also act on other amino acids. This is Alanine racemase (alr) from Staphylococcus epidermidis (strain ATCC 35984 / DSM 28319 / BCRC 17069 / CCUG 31568 / BM 3577 / RP62A).